Reading from the N-terminus, the 576-residue chain is Aspartate--tRNA ligase (576 aa).

Glu173 serves as a coordination point for L-aspartate. The tract at residues 197 to 200 (QLFK) is aspartate. Arg219 is an L-aspartate binding site. ATP is bound by residues 219-221 (RDE) and Gln228. His438 provides a ligand contact to L-aspartate. Glu470 contacts ATP. L-aspartate is bound at residue Arg477. 522-525 (GLDR) is a binding site for ATP.

It belongs to the class-II aminoacyl-tRNA synthetase family. Type 1 subfamily. Homodimer.

The protein resides in the cytoplasm. It catalyses the reaction tRNA(Asp) + L-aspartate + ATP = L-aspartyl-tRNA(Asp) + AMP + diphosphate. Catalyzes the attachment of L-aspartate to tRNA(Asp) in a two-step reaction: L-aspartate is first activated by ATP to form Asp-AMP and then transferred to the acceptor end of tRNA(Asp). This is Aspartate--tRNA ligase from Aster yellows witches'-broom phytoplasma (strain AYWB).